The sequence spans 503 residues: Lysine--tRNA ligase (503 aa).

Mg(2+)-binding residues include glutamate 413 and glutamate 420.

It belongs to the class-II aminoacyl-tRNA synthetase family. As to quaternary structure, homodimer. Requires Mg(2+) as cofactor.

Its subcellular location is the cytoplasm. It carries out the reaction tRNA(Lys) + L-lysine + ATP = L-lysyl-tRNA(Lys) + AMP + diphosphate. The chain is Lysine--tRNA ligase from Mannheimia succiniciproducens (strain KCTC 0769BP / MBEL55E).